The sequence spans 413 residues: Histidine--tRNA ligase (413 aa).

It belongs to the class-II aminoacyl-tRNA synthetase family. As to quaternary structure, homodimer.

The protein resides in the cytoplasm. The catalysed reaction is tRNA(His) + L-histidine + ATP = L-histidyl-tRNA(His) + AMP + diphosphate + H(+). The chain is Histidine--tRNA ligase (hisS) from Rickettsia prowazekii (strain Madrid E).